The primary structure comprises 143 residues: Large ribosomal subunit protein uL15 (143 aa).

The disordered stretch occupies residues 1–45; it reads MLLNTVQPGVGAKHAKRRVGRGIGSGLGKTCGRGHKGQKSRAGGF. The span at 21–31 shows a compositional bias: gly residues; that stretch reads RGIGSGLGKTC.

This sequence belongs to the universal ribosomal protein uL15 family. In terms of assembly, part of the 50S ribosomal subunit.

In terms of biological role, binds to the 23S rRNA. The sequence is that of Large ribosomal subunit protein uL15 from Chromobacterium violaceum (strain ATCC 12472 / DSM 30191 / JCM 1249 / CCUG 213 / NBRC 12614 / NCIMB 9131 / NCTC 9757 / MK).